We begin with the raw amino-acid sequence, 377 residues long: Protein ECM9 (377 aa).

Functionally, may be involved in cell wall organization and biogenesis. In Saccharomyces cerevisiae (strain ATCC 204508 / S288c) (Baker's yeast), this protein is Protein ECM9 (ECM9).